The following is a 188-amino-acid chain: Elongation factor P (188 aa).

The residue at position 34 (Lys-34) is an N6-(3,6-diaminohexanoyl)-5-hydroxylysine.

It belongs to the elongation factor P family. Post-translationally, may be beta-lysylated on the epsilon-amino group of Lys-34 by the combined action of EpmA and EpmB, and then hydroxylated on the C5 position of the same residue by EpmC (if this protein is present). Lysylation is critical for the stimulatory effect of EF-P on peptide-bond formation. The lysylation moiety may extend toward the peptidyltransferase center and stabilize the terminal 3-CCA end of the tRNA. Hydroxylation of the C5 position on Lys-34 may allow additional potential stabilizing hydrogen-bond interactions with the P-tRNA.

It localises to the cytoplasm. It participates in protein biosynthesis; polypeptide chain elongation. In terms of biological role, involved in peptide bond synthesis. Alleviates ribosome stalling that occurs when 3 or more consecutive Pro residues or the sequence PPG is present in a protein, possibly by augmenting the peptidyl transferase activity of the ribosome. Modification of Lys-34 is required for alleviation. The protein is Elongation factor P of Yersinia pseudotuberculosis serotype O:1b (strain IP 31758).